The following is a 1172-amino-acid chain: Thrombospondin-2 (1172 aa).

The signal sequence occupies residues 1–18 (MVWRLVLLALWVWPSTQA). Residues 19–215 (GHQDKDTTFD…LQNVHLVFEN (197 aa)) form the Laminin G-like domain. The heparin-binding stretch occupies residues 19 to 232 (GHQDKDTTFD…KKGCQQGQGA (214 aa)). N-linked (GlcNAc...) asparagine glycans are attached at residues N151, N316, and N330. The region spanning 318–375 (SACWQDGRFFAENETWVVDSCTTCTCKKFKTICHQITCPPATCASPSFVEGECCPSCL) is the VWFC domain. 3 TSP type-1 domains span residues 381–431 (EEGW…SKCD), 437–492 (DGGW…APCP), and 494–549 (DGRW…RSCP). Cystine bridges form between C393–C425, C397–C430, C408–C415, C449–C486, C453–C491, C464–C476, C506–C543, C510–C548, C521–C533, C553–C564, C558–C574, C577–C588, C594–C610, C601–C619, C622–C646, C652–C665, C659–C678, C680–C691, C707–C715, C720–C740, C756–C776, C779–C799, C815–C835, C838–C858, C876–C896, C912–C932, and C948–C1169. N457 is a glycosylation site (N-linked (GlcNAc...) asparagine). The EGF-like 1 domain occupies 549–589 (PVDGCLSNPCFPGAQCSSFPDGSWSCGSCPVGFLGNGTHCE). N584 carries an N-linked (GlcNAc...) asparagine glycan. Positions 648–692 (PENPCKDKTHNCHKHAECIYLGHFSDPMYKCECQTGYAGDGLICG) constitute an EGF-like 2 domain. TSP type-3 repeat units follow at residues 693–728 (EDSDLDGWPNLNLVCATNATYHCIKDNCPHLPNSGQ), 729–764 (EDFDKDGIGDACDDDDDNDGVTDEKDNCQLLFNPRQ), 765–787 (ADYDKDEVGDRCDNCPYVHNPAQ), 788–823 (IDTDNNGEGDACSVDIDGDDVFNERDNCPYVYNTDQ), 824–846 (RDTDGDGVGDHCDNCPLVHNPDQ), 847–884 (TDVDNDLVGDQCDNNEDIDDDGHQNNQDNCPYISNANQ), 885–920 (ADHDRDGQGDACDPDDDNDGVPDDRDNCRLVFNPDQ), and 921–956 (EDLDGDGRGDICKDDFDNDNIPDIDDVCPENNAISE). N710 carries an N-linked (GlcNAc...) asparagine glycan. A disordered region spans residues 843–931 (NPDQTDVDND…DLDGDGRGDI (89 aa)). Residues 847–866 (TDVDNDLVGDQCDNNEDIDD) are compositionally biased toward acidic residues. The segment covering 870-884 (QNNQDNCPYISNANQ) has biased composition (polar residues). The span at 896 to 905 (CDPDDDNDGV) shows a compositional bias: acidic residues. Residues 928–930 (RGD) carry the Cell attachment site motif. The TSP C-terminal domain maps to 960–1172 (RNFQMVPLDP…SDLKYECRDI (213 aa)). N1069 carries N-linked (GlcNAc...) asparagine glycosylation.

This sequence belongs to the thrombospondin family. Homotrimer; disulfide-linked. Interacts (via the TSP type I repeats) with CD36; the interaction conveys an antiangiogenic effect. Interacts (via the TSP type I repeats) with HRG; the interaction blocks the antiangiogenic effect of THBS2 with CD36. Can bind to fibrinogen, fibronectin, laminin and type V collagen. In terms of tissue distribution, high expression in invertebral disk tissue.

In terms of biological role, adhesive glycoprotein that mediates cell-to-cell and cell-to-matrix interactions. Ligand for CD36 mediating antiangiogenic properties. This Homo sapiens (Human) protein is Thrombospondin-2 (THBS2).